The sequence spans 330 residues: DNA-binding death effector domain-containing protein 2 (330 aa).

Residues 25–104 (SLHRMFEVVG…RHDLLPHLAR (80 aa)) form the DED domain. Residues 104-109 (RKRRRP) carry the Nuclear localization signal motif. The tract at residues 104–195 (RKRRRPVSPE…HQELGRPSSE (92 aa)) is disordered. A compositionally biased stretch (low complexity) spans 137-147 (ASSSSDSPQSQ). Residues 156–174 (KRQRRSRGRPSSGARQRRR) carry the Bipartite nuclear localization signal motif.

Interacts with CASP8, CASP10 and GTF3C3. Homodimerizes and heterodimerizes with DEDD. Expression is high in liver, heart, kidney, and testis but low in brain, spleen, lung, and skeleton muscle.

It localises to the nucleus. It is found in the nucleolus. May play a critical role in death receptor-induced apoptosis and may target CASP8 and CASP10 to the nucleus. May regulate degradation of intermediate filaments during apoptosis. May play a role in the general transcription machinery in the nucleus and might be an important regulator of the activity of GTF3C3. This Mus musculus (Mouse) protein is DNA-binding death effector domain-containing protein 2 (Dedd2).